Reading from the N-terminus, the 374-residue chain is Aminomethyltransferase (374 aa).

The protein belongs to the GcvT family. The glycine cleavage system is composed of four proteins: P, T, L and H.

The catalysed reaction is N(6)-[(R)-S(8)-aminomethyldihydrolipoyl]-L-lysyl-[protein] + (6S)-5,6,7,8-tetrahydrofolate = N(6)-[(R)-dihydrolipoyl]-L-lysyl-[protein] + (6R)-5,10-methylene-5,6,7,8-tetrahydrofolate + NH4(+). The glycine cleavage system catalyzes the degradation of glycine. This is Aminomethyltransferase from Prochlorococcus marinus (strain MIT 9313).